Reading from the N-terminus, the 326-residue chain is tRNA-dihydrouridine(20a/20b) synthase [NAD(P)+] (326 aa).

FMN-binding positions include 26–28 (PMV) and Gln-79. Catalysis depends on Cys-108, which acts as the Proton donor. FMN contacts are provided by residues Lys-149, His-177, 208-210 (NGD), and 232-233 (AR).

The protein belongs to the Dus family. Dus4 subfamily. Requires FMN as cofactor.

The protein resides in the mitochondrion. It catalyses the reaction 5,6-dihydrouridine(20a) in tRNA + NADP(+) = uridine(20a) in tRNA + NADPH + H(+). It carries out the reaction 5,6-dihydrouridine(20a) in tRNA + NAD(+) = uridine(20a) in tRNA + NADH + H(+). The catalysed reaction is 5,6-dihydrouridine(20b) in tRNA + NAD(+) = uridine(20b) in tRNA + NADH + H(+). The enzyme catalyses 5,6-dihydrouridine(20b) in tRNA + NADP(+) = uridine(20b) in tRNA + NADPH + H(+). It catalyses the reaction a 5,6-dihydrouridine in mRNA + NAD(+) = a uridine in mRNA + NADH + H(+). It carries out the reaction a 5,6-dihydrouridine in mRNA + NADP(+) = a uridine in mRNA + NADPH + H(+). Functionally, catalyzes the synthesis of dihydrouridine, a modified base found in the D-loop of most tRNAs. Also able to mediate dihydrouridylation of some mRNAs, thereby affecting their translation. In Schizosaccharomyces pombe (strain 972 / ATCC 24843) (Fission yeast), this protein is tRNA-dihydrouridine(20a/20b) synthase [NAD(P)+].